The sequence spans 976 residues: DNA-directed RNA polymerase 1, mitochondrial (976 aa).

A mitochondrion-targeting transit peptide spans 1-42 (MWRNILGRASLRKVKFLSDSSSSGTHYPVNRVRGILSSVNLS). Residues D677, K752, and D909 contribute to the active site.

Belongs to the phage and mitochondrial RNA polymerase family.

It localises to the mitochondrion. It catalyses the reaction RNA(n) + a ribonucleoside 5'-triphosphate = RNA(n+1) + diphosphate. In terms of biological role, DNA-dependent RNA polymerase catalyzes the transcription of DNA into RNA using the four ribonucleoside triphosphates as substrates. This is DNA-directed RNA polymerase 1, mitochondrial (RPOT1) from Arabidopsis thaliana (Mouse-ear cress).